A 141-amino-acid chain; its full sequence is Large ribosomal subunit protein uL11 (141 aa).

It belongs to the universal ribosomal protein uL11 family. Part of the ribosomal stalk of the 50S ribosomal subunit. Interacts with L10 and the large rRNA to form the base of the stalk. L10 forms an elongated spine to which L12 dimers bind in a sequential fashion forming a multimeric L10(L12)X complex. Post-translationally, one or more lysine residues are methylated.

Its function is as follows. Forms part of the ribosomal stalk which helps the ribosome interact with GTP-bound translation factors. This Geobacillus thermodenitrificans (strain NG80-2) protein is Large ribosomal subunit protein uL11.